Consider the following 101-residue polypeptide: UPF0213 protein VC0395_0675/VC395_A0575 (101 aa).

Residues 9–85 (SPWFVYLVRC…KALSKSQKEA (77 aa)) enclose the GIY-YIG domain.

The protein belongs to the UPF0213 family.

This chain is UPF0213 protein VC0395_0675/VC395_A0575, found in Vibrio cholerae serotype O1 (strain ATCC 39541 / Classical Ogawa 395 / O395).